The chain runs to 215 residues: MTTDYKSPLRVGIGGPVGSGKTALLEKLCKAMRDDYHIAVVTNDIYTKEDQRILTEAQALEPERIVGVETGGCPHTAIREDASMNLAAVENLARKFGNLDVVFVESGGDNLSATFSPELADLTIYVIDVASGEKIPRKGGPGITKSDLLVINKIDLAPMVGADLGIMASDTNRMRGQKPWAFSNLRNDVEGLEKIIGFVVEEGMLVSHSEKAVSG.

Residue 15-22 (GPVGSGKT) participates in GTP binding.

It belongs to the SIMIBI class G3E GTPase family. UreG subfamily. In terms of assembly, homodimer. UreD, UreF and UreG form a complex that acts as a GTP-hydrolysis-dependent molecular chaperone, activating the urease apoprotein by helping to assemble the nickel containing metallocenter of UreC. The UreE protein probably delivers the nickel.

It localises to the cytoplasm. Facilitates the functional incorporation of the urease nickel metallocenter. This process requires GTP hydrolysis, probably effectuated by UreG. This Alcanivorax borkumensis (strain ATCC 700651 / DSM 11573 / NCIMB 13689 / SK2) protein is Urease accessory protein UreG.